The sequence spans 1393 residues: MVEPGQDLLLAALSESGISPNDLFDIDGGDAGLATPMPTPSVQQSVPLSALELGLETEAAVPVKQEPETVPTPALLNVRQQPPSTTTFVLNQINHLPPLGSTIVMTKTPPVTTNRQTITLTKFIQTTASTRPSVSAPTVRNAMTSAPSKDQVQLKDLLKNNSLNELMKLKPPANIAQPVATAATDVSNGTVKKESSNKEGARMWINDMKMRSFSPTMKVPVVKEDDEPEEEDEEEMGHAETYAEYMPIKLKIGLRHPDAVVETSSLSSVTPPDVWYKTSISEETIDNGWLSALQLEAITYAAQQHETFLPNGDRAGFLIGDGAGVGKGRTIAGIIYENYLLSRKRALWFSVSNDLKYDAERDLRDIGAKNILVHSLNKFKYGKISSKHNGSVKKGVIFATYSSLIGESQSGGKYKTRLKQLLHWCGDDFDGVIVFDECHKAKNLCPVGSSKPTKTGLAVLELQNKLPKARVVYASATGASEPRNMAYMNRLGIWGEGTPFREFSDFIQAVERRGVGAMEIVAMDMKLRGMYIARQLSFTGVTFKIEEVLLSQSYVKMYNKAVKLWVIARERFQQAADLIDAEQRMKKSMWGQFWSAHQRFFKYLCIASKVKRVVQLAREEIKNGKCVVIGLQSTGEARTLEALEEGGGELNDFVSTAKGVLQSLIEKHFPAPDRKKLYSLLGIDLTAPSNNSSPRDSPCKENKIKKRKGEEITREAKKARKVGGLTGSSSDDSGSESDASDNEESDYESSKNMSSGDDDDFNPFLDESNEDDENDPWLIRKDHKKNKEKKKKKSIDPDSIQSALLASGLGSKRPSFSSTPVISPAPNSTPANSNTNSNSSLITSQDAVERAQQMKKDLLDKLEKLAEDLPPNTLDELIDELGGPENVAEMTGRKGRVVSNDDGSISYESRSELDVPVEILNITEKQRFMDGDKNIAIISEAASSGISLQADRRAKNQRRRVHMTLELPWSADRAIQQFGRTHRSNQVTAPEYVFLISELAGEQRFASIVAKRLESLGALTHGDRRATESRDLSRFNFDNKYGRNALEIVMKSIVNLDSPMVSPPPDYPGEFFKDVRQGLIGVGLINVEDRSGILTLDKDYNNIGKFLNRILGMEVHQQNALFQYFADTLTAVVQNAKKNGRYDMGILDLGSGDEKVRKSDVKKFLTPGYSTSGHVELYTISVERGMSWEEATKIWAELTGPDDGFYLSLQIRNNKKTAILVKEVNPKKKLFLVYRPNTGKQLKLEIYADLKKKYKKVVSDDALMHWLDQYNSSADTCTHAYWRGNCKKASLGLVCEIGLRCRTYYVLCGSVLSVWTKVEGVLASVSGTNVKMQIVRLRTEDGQRIVGLIIPANCVSPLVNLLSTSDQSQQLAVQQKQLWQQHHPQSITNLSNA.

The disordered stretch occupies residues 129–148 (STRPSVSAPTVRNAMTSAPS). Ser-148 bears the Phosphoserine mark. Lys-149 is subject to N6-acetyllysine. Ser-162 and Ser-214 each carry phosphoserine. An N6-acetyllysine modification is found at Lys-413. The tract at residues 687 to 840 (APSNNSSPRD…ANSNTNSNSS (154 aa)) is disordered. Phosphoserine is present on residues Ser-692, Ser-693, and Ser-697. Residues 697-716 (SPCKENKIKKRKGEEITREA) are compositionally biased toward basic and acidic residues. Acidic residues predominate over residues 733–747 (SGSESDASDNEESDY). 3 positions are modified to phosphoserine: Ser-754, Ser-755, and Ser-768. The span at 756-775 (GDDDDFNPFLDESNEDDEND) shows a compositional bias: acidic residues. Over residues 781 to 793 (KDHKKNKEKKKKK) the composition is skewed to basic residues. Phosphoserine is present on residues Ser-794 and Ser-815. Positions 824–840 (PAPNSTPANSNTNSNSS) are enriched in low complexity. Residues 843 to 870 (TSQDAVERAQQMKKDLLDKLEKLAEDLP) are a coiled coil. Lys-1222 carries the N6-acetyllysine modification. At Ser-1386 the chain carries Phosphoserine.

The protein belongs to the SBNO family.

The protein resides in the nucleus. Functionally, plays a crucial role in the regulation of neural stem cells (NSCs) proliferation. Enhances the phosphorylation of GSK3B through the PI3K-Akt signaling pathway, thereby upregulating the Wnt/beta-catenin signaling pathway and promoting the proliferation of NSCs. Improves ischemic stroke recovery while inhibiting neuroinflammation through small extracellular vesicles (sEVs)-mediated mechanism. Enhances the secretion of sEVs from NSCs, which in turn inhibit both the MAPK and NF-kappaB pathways in microglia. This inhibition suppresses the pro-inflammatory M1 polarization of microglia, promoting a shift towards the M2 anti-inflammatory phenotype, which is beneficial for reducing neuroinflammation. The protein is Protein strawberry notch homolog 1 (SBNO1) of Homo sapiens (Human).